A 209-amino-acid chain; its full sequence is Response regulator protein VraR (209 aa).

In terms of domain architecture, Response regulatory spans 4–120 (KVLFVDDHEM…DIADAVRKTS (117 aa)). 4-aspartylphosphate is present on D55. The HTH luxR-type domain maps to 141–206 (RAELYEMLTE…QAVIYAFQHN (66 aa)). A DNA-binding region (H-T-H motif) is located at residues 165-184 (NQEIASASHITIKTVKTHVS).

As to quaternary structure, homodimer. Phosphorylated by VraS. Phosphorylation state of VraR controls dimerization of the protein.

Its function is as follows. Member of the two-component regulatory system VraS/VraR involved in the control of the cell wall peptidoglycan biosynthesis. Upon cellular stress, the histidine kinase VraS transfers the phosphoryl group onto VraR. Upon phosphorylation, VraR dimerizes at the N-terminal domain. In turn, phosphorylation-induced dimerization expand and enhance the VraR binding to its own promoter leading to increased expression and subsequent modulation of as many as 40 genes, which ultimately constitute the S.aureus response to cell wall damage. In addition, inhibits the host autophagic flux and delays the early stage of autophagosome formation, thereby promoting bacterial survival. Facilitates the ability of S.aureus to resist host polymorphonuclear leukocytes-mediated phagocytosis and killing thus contributing to immune evasion. The polypeptide is Response regulator protein VraR (vraR) (Staphylococcus aureus (strain NCTC 8325 / PS 47)).